A 944-amino-acid chain; its full sequence is Nonsense-mediated mRNA decay factor SMG8 (944 aa).

Disordered stretches follow at residues 560 to 597 (NTGK…QNTA) and 628 to 653 (QASS…DTEN). A compositionally biased stretch (acidic residues) spans 568–583 (QDEDAGEDEAEEEEGQ). The span at 628–650 (QASSEQLSNSEQNTTSSGTSSAD) shows a compositional bias: polar residues.

Belongs to the SMG8 family.

In terms of biological role, involved in nonsense-mediated decay (NMD) of mRNAs containing premature stop codons. Probable component of kinase complex containing nonC and recruited to stalled ribosomes. The sequence is that of Nonsense-mediated mRNA decay factor SMG8 from Drosophila simulans (Fruit fly).